Reading from the N-terminus, the 433-residue chain is Enolase (433 aa).

(2R)-2-phosphoglycerate is bound at residue glutamine 167. The active-site Proton donor is glutamate 209. The Mg(2+) site is built by aspartate 246, glutamate 291, and aspartate 318. The (2R)-2-phosphoglycerate site is built by lysine 343, arginine 372, serine 373, and lysine 394. Lysine 343 (proton acceptor) is an active-site residue.

It belongs to the enolase family. In terms of assembly, component of the RNA degradosome, a multiprotein complex involved in RNA processing and mRNA degradation. Requires Mg(2+) as cofactor.

The protein resides in the cytoplasm. Its subcellular location is the secreted. It is found in the cell surface. It carries out the reaction (2R)-2-phosphoglycerate = phosphoenolpyruvate + H2O. It functions in the pathway carbohydrate degradation; glycolysis; pyruvate from D-glyceraldehyde 3-phosphate: step 4/5. Catalyzes the reversible conversion of 2-phosphoglycerate (2-PG) into phosphoenolpyruvate (PEP). It is essential for the degradation of carbohydrates via glycolysis. The sequence is that of Enolase from Aeromonas hydrophila subsp. hydrophila (strain ATCC 7966 / DSM 30187 / BCRC 13018 / CCUG 14551 / JCM 1027 / KCTC 2358 / NCIMB 9240 / NCTC 8049).